Consider the following 273-residue polypeptide: Undecaprenyl-diphosphatase (273 aa).

A run of 6 helical transmembrane segments spans residues 43 to 63 (IGNVFEVVIQLGAILAVCWEY), 82 to 102 (KFVLNLLIAFLPAAIVGVLLI), 109 to 129 (LFNPVAVACALVVGGLVILWA), 185 to 205 (TEFSFFLAIPIMFAATAYDVL), 214 to 234 (ADLPTFGTGFLFAFLSAFVAV), and 249 to 269 (FAWYRIVFGLIILGSWWLGWI).

Belongs to the UppP family.

Its subcellular location is the cell inner membrane. It catalyses the reaction di-trans,octa-cis-undecaprenyl diphosphate + H2O = di-trans,octa-cis-undecaprenyl phosphate + phosphate + H(+). Catalyzes the dephosphorylation of undecaprenyl diphosphate (UPP). Confers resistance to bacitracin. The sequence is that of Undecaprenyl-diphosphatase from Laribacter hongkongensis (strain HLHK9).